Here is a 132-residue protein sequence, read N- to C-terminus: Small ribosomal subunit protein uS12 (132 aa).

D89 carries the 3-methylthioaspartic acid modification. The segment at 102-132 (LDTSGVADRKQSRSKYGAKVPKAGAAPAKKK) is disordered. Low complexity predominate over residues 118-132 (GAKVPKAGAAPAKKK).

It belongs to the universal ribosomal protein uS12 family. Part of the 30S ribosomal subunit. Contacts proteins S8 and S17. May interact with IF1 in the 30S initiation complex.

In terms of biological role, with S4 and S5 plays an important role in translational accuracy. Functionally, interacts with and stabilizes bases of the 16S rRNA that are involved in tRNA selection in the A site and with the mRNA backbone. Located at the interface of the 30S and 50S subunits, it traverses the body of the 30S subunit contacting proteins on the other side and probably holding the rRNA structure together. The combined cluster of proteins S8, S12 and S17 appears to hold together the shoulder and platform of the 30S subunit. This Chlorobaculum tepidum (strain ATCC 49652 / DSM 12025 / NBRC 103806 / TLS) (Chlorobium tepidum) protein is Small ribosomal subunit protein uS12.